The primary structure comprises 429 residues: Adenylosuccinate synthetase (429 aa).

Residues 12 to 18 (GDEGKGK) and 40 to 42 (GHT) contribute to the GTP site. Asp13 serves as the catalytic Proton acceptor. Positions 13 and 40 each coordinate Mg(2+). IMP contacts are provided by residues 13 to 16 (DEGK), 38 to 41 (NAGH), Thr129, Arg143, Gln223, Thr238, and Arg302. His41 (proton donor) is an active-site residue. 298-304 (TVTGRRR) lines the substrate pocket. GTP contacts are provided by residues Arg304, 330–332 (KLD), and 412–414 (STS).

The protein belongs to the adenylosuccinate synthetase family. As to quaternary structure, homodimer. Requires Mg(2+) as cofactor.

Its subcellular location is the cytoplasm. The enzyme catalyses IMP + L-aspartate + GTP = N(6)-(1,2-dicarboxyethyl)-AMP + GDP + phosphate + 2 H(+). It participates in purine metabolism; AMP biosynthesis via de novo pathway; AMP from IMP: step 1/2. Plays an important role in the de novo pathway of purine nucleotide biosynthesis. Catalyzes the first committed step in the biosynthesis of AMP from IMP. This chain is Adenylosuccinate synthetase, found in Granulibacter bethesdensis (strain ATCC BAA-1260 / CGDNIH1).